The primary structure comprises 415 residues: Putative transcription factor BOFH (415 aa).

The segment at 159 to 221 (SQEPVQHQDQ…NEGEDDDGMD (63 aa)) is disordered. Positions 174-183 (INGGGRGGYW) are enriched in gly residues. Basic residues predominate over residues 193–202 (QQQRRRKKRL). A compositionally biased stretch (acidic residues) spans 206–220 (ETDDDGNEGEDDDGM). 3 DNA-binding regions span residues 234–238 (REHPF), 303–310 (NKPKMRHY), and 374–377 (YVPT).

Belongs to the FLO/LFY family. Acts in the floral primordia.

It is found in the nucleus. Functionally, controls floral meristem identity. Is required very early in flower development and may act here as a transcription factor. The sequence is that of Putative transcription factor BOFH from Brassica oleracea var. botrytis (Cauliflower).